A 445-amino-acid polypeptide reads, in one-letter code: N-succinylarginine dihydrolase (445 aa).

Substrate contacts are provided by residues 19-28 (AGLSFGNVAS), asparagine 110, and 137-138 (HR). Glutamate 174 is a catalytic residue. Arginine 214 lines the substrate pocket. Residue histidine 250 is part of the active site. Substrate is bound by residues aspartate 252 and asparagine 363. Residue cysteine 369 is the Nucleophile of the active site.

Belongs to the succinylarginine dihydrolase family. In terms of assembly, homodimer.

The catalysed reaction is N(2)-succinyl-L-arginine + 2 H2O + 2 H(+) = N(2)-succinyl-L-ornithine + 2 NH4(+) + CO2. It functions in the pathway amino-acid degradation; L-arginine degradation via AST pathway; L-glutamate and succinate from L-arginine: step 2/5. Functionally, catalyzes the hydrolysis of N(2)-succinylarginine into N(2)-succinylornithine, ammonia and CO(2). In Shewanella sediminis (strain HAW-EB3), this protein is N-succinylarginine dihydrolase.